The chain runs to 246 residues: Probable septum site-determining protein MinC (246 aa).

The protein belongs to the MinC family. Interacts with MinD and FtsZ.

Its function is as follows. Cell division inhibitor that blocks the formation of polar Z ring septums. Rapidly oscillates between the poles of the cell to destabilize FtsZ filaments that have formed before they mature into polar Z rings. Prevents FtsZ polymerization. This chain is Probable septum site-determining protein MinC, found in Lachnospira eligens (strain ATCC 27750 / DSM 3376 / VPI C15-48 / C15-B4) (Eubacterium eligens).